A 386-amino-acid polypeptide reads, in one-letter code: MNIPVSLQSKPPLWLLAELTYRCPLQCAYCSNPLDYAAVKQELSTDEWKDVFRQARAMGSVQLGFSGGEPLLRQDLSELIKYAHELGFYTNLITSGIGLTEQKIAEFSEAGLDHIQISFQASDPALSEILSGSRKAFQQKQAMALAVKKHRYPMVLNFVIHRFNIEQIDQIIELSLELNADYVELATCQFYGWAKLNQAALLPTPEQISYAQARVQAYRQYIDQHHLKTKLLLVAPDYYQERPKKCIGGWGQIFITVSPDGTVLPCQSAKDLPLEFPTIQDQSLKTIWNEAFAFNAFRGTDWMQEPCRSCPDKDKDLGGCRCQAYMLTKNMYATDPVCSKSPVHHQIVEARLQTQCSKPDISDLKLRNPQNSKLFFKRASDADSLL.

Residues 9 to 228 (SKPPLWLLAE…RQYIDQHHLK (220 aa)) enclose the Radical SAM core domain. [4Fe-4S] cluster is bound by residues Cys-23, Cys-27, and Cys-30.

The protein belongs to the radical SAM superfamily. PqqE family. Interacts with PqqD. The interaction is necessary for activity of PqqE. It depends on [4Fe-4S] cluster as a cofactor.

It carries out the reaction [PQQ precursor protein] + S-adenosyl-L-methionine = E-Y cross-linked-[PQQ precursor protein] + 5'-deoxyadenosine + L-methionine + H(+). It participates in cofactor biosynthesis; pyrroloquinoline quinone biosynthesis. Catalyzes the cross-linking of a glutamate residue and a tyrosine residue in the PqqA protein as part of the biosynthesis of pyrroloquinoline quinone (PQQ). This chain is PqqA peptide cyclase, found in Acinetobacter baylyi (strain ATCC 33305 / BD413 / ADP1).